We begin with the raw amino-acid sequence, 368 residues long: 1-deoxy-D-xylulose 5-phosphate reductoisomerase (368 aa).

Thr-9, Gly-10, Ser-11, Ile-12, Asn-35, and Asn-106 together coordinate NADPH. Lys-107 contacts 1-deoxy-D-xylulose 5-phosphate. Glu-108 lines the NADPH pocket. A Mn(2+)-binding site is contributed by Asp-132. 1-deoxy-D-xylulose 5-phosphate-binding residues include Ser-133, Glu-134, Ser-158, and His-181. Glu-134 serves as a coordination point for Mn(2+). Position 187 (Gly-187) interacts with NADPH. 1-deoxy-D-xylulose 5-phosphate contacts are provided by Ser-194, Asn-199, Lys-200, and Glu-203. Glu-203 is a Mn(2+) binding site.

This sequence belongs to the DXR family. Mg(2+) is required as a cofactor. Requires Mn(2+) as cofactor.

It catalyses the reaction 2-C-methyl-D-erythritol 4-phosphate + NADP(+) = 1-deoxy-D-xylulose 5-phosphate + NADPH + H(+). It functions in the pathway isoprenoid biosynthesis; isopentenyl diphosphate biosynthesis via DXP pathway; isopentenyl diphosphate from 1-deoxy-D-xylulose 5-phosphate: step 1/6. Its function is as follows. Catalyzes the NADPH-dependent rearrangement and reduction of 1-deoxy-D-xylulose-5-phosphate (DXP) to 2-C-methyl-D-erythritol 4-phosphate (MEP). This is 1-deoxy-D-xylulose 5-phosphate reductoisomerase from Mycoplasmoides gallisepticum (strain R(low / passage 15 / clone 2)) (Mycoplasma gallisepticum).